Consider the following 279-residue polypeptide: 3-methyl-2-oxobutanoate hydroxymethyltransferase (279 aa).

Positions 44 and 83 each coordinate Mg(2+). Residues 44 to 45 (DS), Asp83, and Lys112 each bind 3-methyl-2-oxobutanoate. Glu114 contacts Mg(2+). The Proton acceptor role is filled by Glu181.

Belongs to the PanB family. As to quaternary structure, homodecamer; pentamer of dimers. Mg(2+) serves as cofactor.

Its subcellular location is the cytoplasm. It catalyses the reaction 3-methyl-2-oxobutanoate + (6R)-5,10-methylene-5,6,7,8-tetrahydrofolate + H2O = 2-dehydropantoate + (6S)-5,6,7,8-tetrahydrofolate. Its pathway is cofactor biosynthesis; coenzyme A biosynthesis. Functionally, catalyzes the reversible reaction in which hydroxymethyl group from 5,10-methylenetetrahydrofolate is transferred onto alpha-ketoisovalerate to form ketopantoate. The sequence is that of 3-methyl-2-oxobutanoate hydroxymethyltransferase from Nitrosopumilus maritimus (strain SCM1).